A 1829-amino-acid chain; its full sequence is Sodium channel protein type 4 subunit alpha A (1829 aa).

Residues 1–124 (MARLLPPTGT…RGAIKILIHS (124 aa)) are Cytoplasmic-facing. The tract at residues 32–52 (STREELEGAEEEPQAPSSDLE) is disordered. The stretch at 106-421 (CISPFSIVRR…VVAMAYDEQN (316 aa)) is one I repeat. The chain crosses the membrane as a helical span at residues 125–143 (LFSMFIMITILSNCVFMTM). The Extracellular segment spans residues 144–150 (SNPPAWS). The chain crosses the membrane as a helical span at residues 151-171 (KTVEYVFTGIYTFEATVKVLS). Topologically, residues 172 to 185 (RGFCIGPFTFLRDP) are cytoplasmic. The chain crosses the membrane as a helical span at residues 186 to 203 (WNWLDFMVISMAYVTEFV). Topologically, residues 204–209 (DLGNVS) are extracellular. The N-linked (GlcNAc...) asparagine glycan is linked to N207. The helical transmembrane segment at 210-226 (ALRTFRVLRALKTITVI) threads the bilayer. The Cytoplasmic segment spans residues 227 to 245 (PGLKTIVGALIQSVKKMID). The helical transmembrane segment at 246-265 (VMILTIFALAVFALIGLQLF) threads the bilayer. The Extracellular portion of the chain corresponds to 266–358 (MGNLRQKCIR…PNYGYTSYDN (93 aa)). C273 and C327 form a disulfide bridge. N-linked (GlcNAc...) asparagine glycans are attached at residues N280, N293, and N329. Cysteines 336 and 342 form a disulfide. Positions 359 to 383 (FGWAFLALFRLMTQDFWENLFQLTL) form an intramembrane region, pore-forming. At 384 to 390 (RAAGKTY) the chain is on the extracellular side. The chain crosses the membrane as a helical span at residues 391-411 (MIFFVVVIFLGSFYLINLILA). Residues 412–582 (VVAMAYDEQN…KWVHFVVMDP (171 aa)) lie on the Cytoplasmic side of the membrane. A compositionally biased stretch (polar residues) spans 446–467 (ETGSKASLASQKTQSRGSNRTG). Positions 446 to 468 (ETGSKASLASQKTQSRGSNRTGS) are disordered. One copy of the II repeat lies at 564-836 (CCAPWILFKK…QIAIGRITRG (273 aa)). The helical transmembrane segment at 583-601 (FVDLGITICIVLNTLFMAM) threads the bilayer. Residues 602 to 612 (EHYPMSPHFEH) are Extracellular-facing. Residues 613-632 (VLSVGNLVFTGIFTAEMVFK) traverse the membrane as a helical segment. Residues 633–646 (LIAMDPYYYFQVGW) lie on the Cytoplasmic side of the membrane. Residues 647-666 (NIFDSIIVTLSLVELGLANV) form a helical membrane-spanning segment. The Extracellular portion of the chain corresponds to 667–668 (QG). The helical transmembrane segment at 669–686 (LSVLRSFRLLRVFKLAKS) threads the bilayer. Residues 687–702 (WPTLNMLIKIIGNSVG) are Cytoplasmic-facing. The chain crosses the membrane as a helical span at residues 703-721 (ALGNLTLVLAIIVFIFAVV). At 722–750 (GMQLFGKSYKDCVCKISEDCELPRWHMND) the chain is on the extracellular side. A disulfide bond links C735 and C741. The pore-forming intramembrane region spans 751-771 (FFHSFLIVFRILCGEWIETMW). Residues 772 to 782 (DCMEVAGASMC) lie on the Extracellular side of the membrane. The cysteines at positions 773 and 782 are disulfide-linked. Residues 783–801 (LIVFMMVMVIGNLVVLNLF) form a helical membrane-spanning segment. Over 802 to 998 (LALLLSSFSG…TCFTIVEHDY (197 aa)) the chain is Cytoplasmic. Positions 901–957 (SDVEEDEDSESSDEEDAKATLNDGDSSVCSTVDYQPPEPEPEPEEVEEEEPEPEEPE) are disordered. The span at 902-916 (DVEEDEDSESSDEED) shows a compositional bias: acidic residues. Polar residues predominate over residues 923-933 (DGDSSVCSTVD). Residues 939 to 957 (PEPEPEEVEEEEPEPEEPE) show a composition bias toward acidic residues. The III repeat unit spans residues 979-1292 (WGKKWWNLRR…KKYYNAMKKL (314 aa)). A helical transmembrane segment spans residues 999–1016 (FETFIIFMILLSSGALAF). The Extracellular segment spans residues 1017–1029 (EDINIERRRVIKT). A helical transmembrane segment spans residues 1030–1048 (ILEYADKVFTYIFIVEMLL). The Cytoplasmic segment spans residues 1049-1062 (KWVAYGFKTYFTNA). The chain crosses the membrane as a helical span at residues 1063–1081 (WCWLDFLIVDVSLVSLTAN). The Extracellular segment spans residues 1082 to 1089 (LMGYSELG). Residues 1090 to 1108 (AIKSLRTLRALRPLRALSR) form a helical membrane-spanning segment. Topologically, residues 1109–1125 (FEGMRVVVNALVGAIPS) are cytoplasmic. Residues 1126–1145 (IFNVLLVCLIFWLIFSIMGV) traverse the membrane as a helical segment. The Extracellular segment spans residues 1146 to 1196 (NLFAGKFYHCINTTTEERIPMDVVNNKSDCMALMYTNEVRWVNVKVNYDNV). A disulfide bond links C1155 and C1175. 2 N-linked (GlcNAc...) asparagine glycosylation sites follow: N1157 and N1171. Residues 1197-1218 (GLGYLSLLQIATFKGWMDIMYA) constitute an intramembrane region (pore-forming). Topologically, residues 1219 to 1235 (AVDSREVDEQPSYEINL) are extracellular. The helical transmembrane segment at 1236 to 1257 (YMYLYFVIFIIFGSFFTLNLFI) threads the bilayer. Over 1258–1320 (GVIIDNFNQQ…LVFDFISKQF (63 aa)) the chain is Cytoplasmic. Positions 1276-1278 (IFM) are important for rapid channel inactivation. One copy of the IV repeat lies at 1301–1599 (IPRPSNIIQG…WEKFDVDATQ (299 aa)). The chain crosses the membrane as a helical span at residues 1321–1338 (FDIFIMVLICLNMVTMMI). Over 1339–1349 (ETDDQSAEKEY) the chain is Extracellular. Residues 1350–1368 (VLYQINLVFIVVFTSECVL) form a helical membrane-spanning segment. Topologically, residues 1369 to 1380 (KLFALRQYFFTI) are cytoplasmic. Residues 1381-1398 (GWNVFDFVVVILSIAGLM) traverse the membrane as a helical segment. Residues 1399–1411 (LSDIIEKYFVSPT) are Extracellular-facing. A helical transmembrane segment spans residues 1412–1428 (LFRVIRLARIGRVLRLI). Topologically, residues 1429–1447 (RGAKGIRTLLFALMMSLPA) are cytoplasmic. A helical transmembrane segment spans residues 1448-1465 (LFNIGLLLFLIMFIFSIF). Residues 1466–1487 (GMSNFAYVKKQAGIDDIFNFET) are Extracellular-facing. The pore-forming intramembrane region spans 1488 to 1510 (FGGSIICLFEITTSAGWDGLLLP). Over 1511-1540 (ILNSGPPDCDPDFENPGTDVRGNCGNPGMG) the chain is Extracellular. A disulfide bridge links C1519 with C1534. A helical membrane pass occupies residues 1541–1563 (IMFFCSYIIMSFLVVVNMYIAII). The Cytoplasmic segment spans residues 1564–1829 (LENFNNAQEE…NATTIKESIV (266 aa)). In terms of domain architecture, IQ spans 1693–1722 (EERAAIAVQRIYRRHLLKRAIRYACFMRRS). The segment at 1765–1786 (PMRPNSQPPKPSQVTQTRASVT) is disordered.

Belongs to the sodium channel (TC 1.A.1.10) family. Nav1.4/SCN4A subfamily. Voltage-gated sodium (Nav) channels consist of an ion-conducting alpha subunit which is functional on its own associated with regulatory beta subunits. Expressed in skeletal muscle, brain, spinal cord, and eye.

It localises to the cell membrane. It carries out the reaction Na(+)(in) = Na(+)(out). Functionally, pore-forming subunit of a voltage-gated sodium (Nav) channel that directly mediates the depolarizing phase of action potentials in excitable membranes. Navs, also called VGSCs (voltage-gated sodium channels) or VDSCs (voltage-dependent sodium channels), operate by switching between closed and open conformations depending on the voltage difference across the membrane. In the open conformation they allow Na(+) ions to selectively pass through the pore, along their electrochemical gradient. The influx of Na+ ions provokes membrane depolarization, initiating the propagation of electrical signals throughout cells and tissues. This chain is Sodium channel protein type 4 subunit alpha A (scn4aa), found in Danio rerio (Zebrafish).